A 145-amino-acid polypeptide reads, in one-letter code: Anaerobic nitrite reductase NSHB5 (145 aa).

Residues 2-142 (GFSETQEELV…LAAAIKEEMK (141 aa)) form the Globin domain. Residues 35–39 (EIAPA) carry the Homodimerization motif. Residues Ser45, His59, Lys61, Arg84, Thr88, and His89 each contribute to the heme b site. The Homodimerization signature appears at 96–108 (DAYFEVVKTALLD).

It belongs to the plant globin family. In terms of assembly, homodimer. It depends on heme b as a cofactor. Expressed in embryonic (embryos, coleoptiles and seminal roots) and vegetative (leaves and roots) organs.

Its subcellular location is the cytoplasm. It localises to the nucleus. It catalyses the reaction Fe(III)-heme b-[protein] + nitric oxide + H2O = Fe(II)-heme b-[protein] + nitrite + 2 H(+). Its function is as follows. Phytoglobin that reduces nitrite to nitric oxide under anoxic conditions (e.g. during flooding or in waterlogged soil). May not function as an oxygen storage or transport protein. Has an unusually high affinity for O(2) through an hexacoordinate heme iron because of a very low dissociation constant. The chain is Anaerobic nitrite reductase NSHB5 from Oryza sativa subsp. japonica (Rice).